We begin with the raw amino-acid sequence, 1080 residues long: MPKRTDLKTILIIGAGPIVIGQACEFDYSGAQACKALRDEGYRVVLVNSNPATIMTDPNMADAVYIEPINWQTVEKIIAKEKPDALLPTMGGQTALNCALDLADHGVLEKYNVELIGAKREAIRMAEDRELFRVAMGEIGLDCPRAEVAHTLEEALDIQTRVGYPTIIRPSFTLGGSGGGIAYNREELIDIVGRGLELSPTTEVLVEESVLGWKEFEMEVVRDTADNCIIVCAIENLDPMGVHTGDSITVAPAQTLTDKEYQRLRDASIAVLRKIGVDTGGSNVQFGISPTTGRVVVIEMNPRVSRSSALASKATGFPIAKVAAKLAVGYTLDELKNEITGGLTPASFEPSIDYVVTKIPRFAFEKFPQADARLTTQMKSVGEVMAMGRTFQESLQKALRGLETGKIGLDPTGLDLGSEDDMAALKRELKAPGPERLFYVGDAFRAGMSVADVYALSFIDPWFLDQIEELISLEQQLADDGMAALDAPRLRLLKRAGFSDARLAELIGTNEEAVRTLRRALKVRPVYKRVDSCAAEFATSTAYLYSTYEDECEALPSNRDKIMILGGGPNRIGQGIEFDYCCVHAALALRDDGFETIMVNCNPETVSTDYDTSDRLYFEPLTLEDVLEIVELEQPKGVIVQYGGQTPLKLARALEANGVPVIGTSPDSIDLAEDRERFQQLVDKLGLKQPPNRIARNADEALVLAREIGYPLVVRPSYVLGGRAMEIVYGESDLARYVRDAVKVSNDSPVLLDRFLDNAVEVDVDIIADKDGNVLIGGVMEHIEEAGVHSGDSSCSLPPYSLSAETQAELRRQVVMLAEGLNVVGLMNTQFAVQVNDAGDDIVYLLEVNPRASRTVPFVSKATGMPLAKIAARCMAGKTLAEQGATKEIVPDYYSVKEAIFPFAKFQGVDPILGPEMRSTGEVMGVGRSFGAAFARAQEAGGIKAPPLGKAFVSVRDPDKQRVLPVAQALVERGFTLVATRGTGAWLQQHGLSCEIVNKVAEGRPHIVDSIKNGEIVYIVNTTEGRAAISDSFSIRREALQHRVTYSTTVAGAKALVHSLEFRGTGPVWSLQELHKELEA.

Positions 1 to 403 (MPKRTDLKTI…SLQKALRGLE (403 aa)) are carboxyphosphate synthetic domain. The ATP site is built by Arg-129, Arg-169, Gly-175, Gly-176, Glu-208, Val-210, Glu-215, Gly-241, Val-242, His-243, Gln-285, and Glu-299. The ATP-grasp 1 domain occupies 133–328 (RVAMGEIGLD…IAKVAAKLAV (196 aa)). The Mg(2+) site is built by Gln-285, Glu-299, and Asn-301. Gln-285, Glu-299, and Asn-301 together coordinate Mn(2+). The segment at 404–554 (TGKIGLDPTG…YSTYEDECEA (151 aa)) is oligomerization domain. A carbamoyl phosphate synthetic domain region spans residues 555–942 (LPSNRDKIMI…AFARAQEAGG (388 aa)). Residues 679–876 (QQLVDKLGLK…LAKIAARCMA (198 aa)) form the ATP-grasp 2 domain. ATP contacts are provided by Arg-715, Arg-754, Leu-756, Glu-761, Gly-787, Val-788, His-789, Ser-790, Gln-830, and Glu-847. Residues Gln-830, Glu-847, and Asn-849 each coordinate Mg(2+). Positions 830, 847, and 849 each coordinate Mn(2+). One can recognise an MGS-like domain in the interval 943-1080 (IKAPPLGKAF…LQELHKELEA (138 aa)). The allosteric domain stretch occupies residues 943-1080 (IKAPPLGKAF…LQELHKELEA (138 aa)).

Belongs to the CarB family. In terms of assembly, composed of two chains; the small (or glutamine) chain promotes the hydrolysis of glutamine to ammonia, which is used by the large (or ammonia) chain to synthesize carbamoyl phosphate. Tetramer of heterodimers (alpha,beta)4. Mg(2+) serves as cofactor. The cofactor is Mn(2+).

The enzyme catalyses hydrogencarbonate + L-glutamine + 2 ATP + H2O = carbamoyl phosphate + L-glutamate + 2 ADP + phosphate + 2 H(+). The catalysed reaction is hydrogencarbonate + NH4(+) + 2 ATP = carbamoyl phosphate + 2 ADP + phosphate + 2 H(+). The protein operates within amino-acid biosynthesis; L-arginine biosynthesis; carbamoyl phosphate from bicarbonate: step 1/1. Its pathway is pyrimidine metabolism; UMP biosynthesis via de novo pathway; (S)-dihydroorotate from bicarbonate: step 1/3. Its function is as follows. Large subunit of the glutamine-dependent carbamoyl phosphate synthetase (CPSase). CPSase catalyzes the formation of carbamoyl phosphate from the ammonia moiety of glutamine, carbonate, and phosphate donated by ATP, constituting the first step of 2 biosynthetic pathways, one leading to arginine and/or urea and the other to pyrimidine nucleotides. The large subunit (synthetase) binds the substrates ammonia (free or transferred from glutamine from the small subunit), hydrogencarbonate and ATP and carries out an ATP-coupled ligase reaction, activating hydrogencarbonate by forming carboxy phosphate which reacts with ammonia to form carbamoyl phosphate. This is Carbamoyl phosphate synthase large chain from Xanthomonas campestris pv. campestris (strain ATCC 33913 / DSM 3586 / NCPPB 528 / LMG 568 / P 25).